Here is a 344-residue protein sequence, read N- to C-terminus: MAP3K12-binding inhibitory protein 1 (344 aa).

S91 carries the post-translational modification Phosphoserine. Glycyl lysine isopeptide (Lys-Gly) (interchain with G-Cter in SUMO2) cross-links involve residues K94, K118, K129, K139, K153, and K235. Residues 172 to 344 (AEINENNVRE…AESMATHHLP (173 aa)) form an interaction with MAP3K12 region. The segment at 271–285 (IYQRIKKLEDKILEL) is leucine-zipper 1. An N6-acetyllysine; alternate modification is found at K301. Residue K301 forms a Glycyl lysine isopeptide (Lys-Gly) (interchain with G-Cter in SUMO2); alternate linkage. Glycyl lysine isopeptide (Lys-Gly) (interchain with G-Cter in SUMO2) cross-links involve residues K304 and K325. Residues 314-329 (LAELDEKISALKQALL) form a leucine-zipper 2 region.

Component of the ADA2A-containing complex (ATAC), composed of KAT14, KAT2A, TADA2L, TADA3L, ZZ3, MBIP, WDR5, YEATS2, CCDC101 and DR1. In the complex, it probably interacts directly with KAT2A, KAT14 and WDR5. In terms of tissue distribution, ubiquitous. High expression seen in the heart and lung.

The protein resides in the nucleus. The protein localises to the cytoplasm. Functionally, inhibits the MAP3K12 activity to induce the activation of the JNK/SAPK pathway. Component of the ATAC complex, a complex with histone acetyltransferase activity on histones H3 and H4. The chain is MAP3K12-binding inhibitory protein 1 (MBIP) from Homo sapiens (Human).